Here is a 199-residue protein sequence, read N- to C-terminus: Cell division protein SepF (199 aa).

Residues 15 to 79 form a disordered region; it reads TEDGDETEVQ…PQPQQKSSTE (65 aa).

The protein belongs to the SepF family. As to quaternary structure, homodimer. Interacts with FtsZ.

It is found in the cytoplasm. Its function is as follows. Cell division protein that is part of the divisome complex and is recruited early to the Z-ring. Probably stimulates Z-ring formation, perhaps through the cross-linking of FtsZ protofilaments. Its function overlaps with FtsA. This chain is Cell division protein SepF, found in Streptococcus sanguinis (strain SK36).